Reading from the N-terminus, the 129-residue chain is uncharacterized protein (129 aa).

A disordered region spans residues 52 to 94 (NGDEESQDDWLNDLLKSDGDGGKAGPVDPSHPMETTTTDHSSQ). Over residues 53–62 (GDEESQDDWL) the composition is skewed to acidic residues. Over residues 84–94 (METTTTDHSSQ) the composition is skewed to polar residues.

This is an uncharacterized protein from Caenorhabditis elegans.